The chain runs to 396 residues: Elongation factor Tu (396 aa).

The tr-type G domain occupies 10-206 (KPHVNVGTIG…ALDTYIPTPE (197 aa)). Residues 19-26 (GHVDHGKT) are G1. 19–26 (GHVDHGKT) is a binding site for GTP. Residue threonine 26 coordinates Mg(2+). Residues 60–64 (GITIN) form a G2 region. The G3 stretch occupies residues 81–84 (DCPG). GTP contacts are provided by residues 81–85 (DCPGH) and 136–139 (NKCD). The G4 stretch occupies residues 136-139 (NKCD). A G5 region spans residues 174 to 176 (SAK).

The protein belongs to the TRAFAC class translation factor GTPase superfamily. Classic translation factor GTPase family. EF-Tu/EF-1A subfamily. Monomer.

The protein localises to the cytoplasm. It carries out the reaction GTP + H2O = GDP + phosphate + H(+). GTP hydrolase that promotes the GTP-dependent binding of aminoacyl-tRNA to the A-site of ribosomes during protein biosynthesis. In Thiomonas delicata (Thiomonas cuprina), this protein is Elongation factor Tu.